A 324-amino-acid polypeptide reads, in one-letter code: MMLMTLVDEIKNRSSHVDAAIDELLPVTRPEELYKASRYLVDAGGKRLRPAVLILAAEAVGSNLRSVLPAAVAVELVHNFTLIHDDIMDRDDIRRGMPAVHVKWGEAGAILAGDTLYSKAFEILSKVENEPVRVLKCMDVLSKTCTEICEGQWLDMDFETRKKVTESEYLEMVEKKTSVLYAAAAKIGALLGGASDEVAEALSEYGRLIGIGFQMYDDVLDMTAPEEVLGKVRGSDLMEGKYTLIVINAFEKGVKLDIFGKGEATLEETEAAVRTLTECGSLDYVKNLAISYIEEGKEKLDVLRDCPEKTLLLQIADYMISREY.

Residues Lys46, Arg49, and His78 each coordinate isopentenyl diphosphate. Residues Asp85 and Asp89 each coordinate Mg(2+). Residue Arg94 participates in an all-trans-polyprenyl diphosphate binding. Residue Arg95 participates in isopentenyl diphosphate binding. An all-trans-polyprenyl diphosphate is bound by residues Lys176, Thr177, Gln214, Lys231, and Lys241.

The protein belongs to the FPP/GGPP synthase family. The cofactor is Mg(2+).

The enzyme catalyses isopentenyl diphosphate + (2E,6E)-farnesyl diphosphate = (2E,6E,10E)-geranylgeranyl diphosphate + diphosphate. The protein operates within isoprenoid biosynthesis; geranylgeranyl diphosphate biosynthesis; geranylgeranyl diphosphate from farnesyl diphosphate and isopentenyl diphosphate: step 1/1. Functionally, catalyzes the sequential condensation of isopentenyl pyrophosphate with the allylic pyrophosphates to yield geranylgeranyl diphosphate (GGPP) which is a precursor of the ether-linked lipids. The sequence is that of Geranylgeranyl diphosphate synthase from Methanosarcina mazei (strain ATCC BAA-159 / DSM 3647 / Goe1 / Go1 / JCM 11833 / OCM 88) (Methanosarcina frisia).